Reading from the N-terminus, the 329-residue chain is Anthranilate phosphoribosyltransferase (329 aa).

Residues G78, 81 to 82 (GD), T86, 88 to 91 (NLST), 106 to 114 (KHGNRSASG), and S118 each bind 5-phospho-alpha-D-ribose 1-diphosphate. G78 is a binding site for anthranilate. S90 is a binding site for Mg(2+). Residue N109 participates in anthranilate binding. R164 is an anthranilate binding site. The Mg(2+) site is built by D221 and E222.

The protein belongs to the anthranilate phosphoribosyltransferase family. Homodimer. Mg(2+) serves as cofactor.

It carries out the reaction N-(5-phospho-beta-D-ribosyl)anthranilate + diphosphate = 5-phospho-alpha-D-ribose 1-diphosphate + anthranilate. Its pathway is amino-acid biosynthesis; L-tryptophan biosynthesis; L-tryptophan from chorismate: step 2/5. In terms of biological role, catalyzes the transfer of the phosphoribosyl group of 5-phosphorylribose-1-pyrophosphate (PRPP) to anthranilate to yield N-(5'-phosphoribosyl)-anthranilate (PRA). The chain is Anthranilate phosphoribosyltransferase from Pyrobaculum islandicum (strain DSM 4184 / JCM 9189 / GEO3).